The sequence spans 126 residues: Ribonuclease P protein component (126 aa).

This sequence belongs to the RnpA family. In terms of assembly, consists of a catalytic RNA component (M1 or rnpB) and a protein subunit.

It catalyses the reaction Endonucleolytic cleavage of RNA, removing 5'-extranucleotides from tRNA precursor.. Functionally, RNaseP catalyzes the removal of the 5'-leader sequence from pre-tRNA to produce the mature 5'-terminus. It can also cleave other RNA substrates such as 4.5S RNA. The protein component plays an auxiliary but essential role in vivo by binding to the 5'-leader sequence and broadening the substrate specificity of the ribozyme. The protein is Ribonuclease P protein component of Brevibacillus brevis (strain 47 / JCM 6285 / NBRC 100599).